A 102-amino-acid chain; its full sequence is Flagellar hook-basal body complex protein FliE (102 aa).

The protein belongs to the FliE family.

It localises to the bacterial flagellum basal body. This chain is Flagellar hook-basal body complex protein FliE, found in Oceanobacillus iheyensis (strain DSM 14371 / CIP 107618 / JCM 11309 / KCTC 3954 / HTE831).